The primary structure comprises 882 residues: Ubiquitin carboxyl-terminal hydrolase 4 (882 aa).

The Rhodanese domain maps to 182-308 (YDSSLLLIDV…WVSKKGACET (127 aa)). The segment covering 382 to 399 (KAKSSSTSSVTSSSPAPS) has biased composition (low complexity). Positions 382 to 411 (KAKSSSTSSVTSSSPAPSQLVRPQTSSMPP) are disordered. A compositionally biased stretch (polar residues) spans 402-411 (VRPQTSSMPP). The 361-residue stretch at 519 to 879 (VGLENMGNSC…NAYVLFYHRV (361 aa)) folds into the USP domain. Residue cysteine 528 is the Nucleophile of the active site. Residue histidine 836 is the Proton acceptor of the active site.

It belongs to the peptidase C19 family.

It is found in the cytoplasm. The protein resides in the late endosome membrane. The catalysed reaction is Thiol-dependent hydrolysis of ester, thioester, amide, peptide and isopeptide bonds formed by the C-terminal Gly of ubiquitin (a 76-residue protein attached to proteins as an intracellular targeting signal).. Its activity is regulated as follows. RFU1 is an inhibitor of deubiquitination activity. In terms of biological role, ubiquitin thioesterase that acts at the late endosome/prevacuolar compartment to recover ubiquitin from ubiquitinated membrane proteins en route to the vacuole. Also removes ubiquitin from soluble proteins targeted to proteasomes. Is essential to maintain a normal level of free ubiquitin. Required for promoting coordination of DNA replication and avoids DNA overreplication. This Vanderwaltozyma polyspora (strain ATCC 22028 / DSM 70294 / BCRC 21397 / CBS 2163 / NBRC 10782 / NRRL Y-8283 / UCD 57-17) (Kluyveromyces polysporus) protein is Ubiquitin carboxyl-terminal hydrolase 4 (DOA4).